The primary structure comprises 407 residues: Digeranylgeranylglycerophospholipid reductase (407 aa).

Ala-15, Glu-34, Cys-45, Ala-46, Gly-48, Arg-99, Ala-123, Asp-281, Gly-293, and Ile-294 together coordinate FAD.

This sequence belongs to the geranylgeranyl reductase family. DGGGPL reductase subfamily. FAD serves as cofactor.

It catalyses the reaction a 2,3-bis-O-phytanyl-sn-glycerol 1-phospholipid + 8 oxidized 2[4Fe-4S]-[ferredoxin] = a 2,3-bis-O-(geranylgeranyl)-sn-glycerol 1-phospholipid + 8 reduced 2[4Fe-4S]-[ferredoxin] + 16 H(+). The catalysed reaction is 2,3-bis-O-(phytanyl)-sn-glycerol 1-phosphate + 8 oxidized 2[4Fe-4S]-[ferredoxin] = 2,3-bis-O-(geranylgeranyl)-sn-glycerol 1-phosphate + 8 reduced 2[4Fe-4S]-[ferredoxin] + 16 H(+). It carries out the reaction a 2,3-bis-O-phytanyl-sn-glycerol 1-phospholipid + 8 A = a 2,3-bis-O-(geranylgeranyl)-sn-glycerol 1-phospholipid + 8 AH2. The enzyme catalyses CDP-2,3-bis-O-(geranylgeranyl)-sn-glycerol + 8 AH2 = CDP-2,3-bis-O-(phytanyl)-sn-glycerol + 8 A. It catalyses the reaction archaetidylserine + 8 AH2 = 2,3-bis-O-phytanyl-sn-glycero-3-phospho-L-serine + 8 A. The protein operates within membrane lipid metabolism; glycerophospholipid metabolism. Is involved in the reduction of 2,3-digeranylgeranylglycerophospholipids (unsaturated archaeols) into 2,3-diphytanylglycerophospholipids (saturated archaeols) in the biosynthesis of archaeal membrane lipids. Catalyzes the formation of archaetidic acid (2,3-di-O-phytanyl-sn-glyceryl phosphate) from 2,3-di-O-geranylgeranylglyceryl phosphate (DGGGP) via the hydrogenation of each double bond of the isoprenoid chains. Is also probably able to reduce double bonds of geranyl groups in CDP-2,3-bis-O-(geranylgeranyl)-sn-glycerol and archaetidylserine, thus acting at various stages in the biosynthesis of archaeal membrane lipids. The polypeptide is Digeranylgeranylglycerophospholipid reductase (Methanosarcina mazei (strain ATCC BAA-159 / DSM 3647 / Goe1 / Go1 / JCM 11833 / OCM 88) (Methanosarcina frisia)).